A 588-amino-acid polypeptide reads, in one-letter code: Sulfite reductase [NADPH] hemoprotein beta-component (588 aa).

A compositionally biased stretch (basic and acidic residues) spans M1–E10. The tract at residues M1–E20 is disordered. [4Fe-4S] cluster is bound by residues C443, C449, C488, and C492. A siroheme-binding site is contributed by C492.

This sequence belongs to the nitrite and sulfite reductase 4Fe-4S domain family. In terms of assembly, alpha(8)-beta(8). The alpha component is a flavoprotein, the beta component is a hemoprotein. Siroheme is required as a cofactor. Requires [4Fe-4S] cluster as cofactor.

It carries out the reaction hydrogen sulfide + 3 NADP(+) + 3 H2O = sulfite + 3 NADPH + 4 H(+). Its pathway is sulfur metabolism; hydrogen sulfide biosynthesis; hydrogen sulfide from sulfite (NADPH route): step 1/1. Functionally, component of the sulfite reductase complex that catalyzes the 6-electron reduction of sulfite to sulfide. This is one of several activities required for the biosynthesis of L-cysteine from sulfate. This is Sulfite reductase [NADPH] hemoprotein beta-component from Mannheimia succiniciproducens (strain KCTC 0769BP / MBEL55E).